A 450-amino-acid polypeptide reads, in one-letter code: Ribosomal protein uS12 methylthiotransferase RimO (450 aa).

An MTTase N-terminal domain is found at 16–126 (PRISFVSLGC…VLDAVHQAVP (111 aa)). Residues C25, C61, C90, C157, C161, and C164 each coordinate [4Fe-4S] cluster. Residues 143–380 (LTPRHYAYLK…MLKQQAISAR (238 aa)) enclose the Radical SAM core domain. The region spanning 383–449 (KRKVGTRQQV…AYDLIGSAVG (67 aa)) is the TRAM domain.

The protein belongs to the methylthiotransferase family. RimO subfamily. It depends on [4Fe-4S] cluster as a cofactor.

The protein localises to the cytoplasm. The enzyme catalyses L-aspartate(89)-[ribosomal protein uS12]-hydrogen + (sulfur carrier)-SH + AH2 + 2 S-adenosyl-L-methionine = 3-methylsulfanyl-L-aspartate(89)-[ribosomal protein uS12]-hydrogen + (sulfur carrier)-H + 5'-deoxyadenosine + L-methionine + A + S-adenosyl-L-homocysteine + 2 H(+). Its function is as follows. Catalyzes the methylthiolation of an aspartic acid residue of ribosomal protein uS12. This chain is Ribosomal protein uS12 methylthiotransferase RimO, found in Azorhizobium caulinodans (strain ATCC 43989 / DSM 5975 / JCM 20966 / LMG 6465 / NBRC 14845 / NCIMB 13405 / ORS 571).